Here is a 503-residue protein sequence, read N- to C-terminus: Chromodomain Y-like protein 2 (503 aa).

The 61-residue stretch at 7 to 67 folds into the Chromo domain; that stretch reads YEVERIVDKR…LHLSKDKRVK (61 aa). A disordered region spans residues 66–177; that stretch reads VKSGKQAGAS…GNGSHQPDLE (112 aa). A compositionally biased stretch (basic and acidic residues) spans 88–98; that stretch reads RLSHRPLEPGK. The span at 101-120 shows a compositional bias: basic residues; it reads PSSHKRKRVNSPLSRPKKGS. A compositionally biased stretch (polar residues) spans 130–140; the sequence is KTVSYRTTPSG.

As to quaternary structure, interacts (via chromo domain) with histone H3K9me3.

It localises to the nucleus. This is Chromodomain Y-like protein 2 (Cdyl2) from Mus musculus (Mouse).